Reading from the N-terminus, the 276-residue chain is Large ribosomal subunit protein uL2 (276 aa).

Disordered stretches follow at residues 36-55 (PLPRKAGRNNQGKLTVRHRG) and 219-276 (TVRG…GRKK). Positions 255–276 (LGKKTRKKKNRSNKLIVRGRKK) are enriched in basic residues.

The protein belongs to the universal ribosomal protein uL2 family. Part of the 50S ribosomal subunit. Forms a bridge to the 30S subunit in the 70S ribosome.

Functionally, one of the primary rRNA binding proteins. Required for association of the 30S and 50S subunits to form the 70S ribosome, for tRNA binding and peptide bond formation. It has been suggested to have peptidyltransferase activity; this is somewhat controversial. Makes several contacts with the 16S rRNA in the 70S ribosome. This chain is Large ribosomal subunit protein uL2, found in Macrococcus caseolyticus (strain JCSC5402) (Macrococcoides caseolyticum).